A 520-amino-acid chain; its full sequence is Cytochrome P450 72A68 (520 aa).

A helical membrane pass occupies residues Ile-11–Trp-31. Cys-466 provides a ligand contact to heme.

It belongs to the cytochrome P450 family. The cofactor is heme.

Its subcellular location is the membrane. The catalysed reaction is oleanolate + 3 reduced [NADPH--hemoprotein reductase] + 3 O2 = gypsogenate + 3 oxidized [NADPH--hemoprotein reductase] + 4 H2O + 4 H(+). Its function is as follows. Catalyzes the carboxylation of oleanolic acid at the C-23 position to form gypsogenic acid. Involved in the hemolytic saponin biosynthetic pathway. The sequence is that of Cytochrome P450 72A68 from Medicago truncatula (Barrel medic).